The following is a 409-amino-acid chain: Tryptophan synthase beta chain (409 aa).

Lys95 bears the N6-(pyridoxal phosphate)lysine mark.

Belongs to the TrpB family. In terms of assembly, tetramer of two alpha and two beta chains. Requires pyridoxal 5'-phosphate as cofactor.

It catalyses the reaction (1S,2R)-1-C-(indol-3-yl)glycerol 3-phosphate + L-serine = D-glyceraldehyde 3-phosphate + L-tryptophan + H2O. The protein operates within amino-acid biosynthesis; L-tryptophan biosynthesis; L-tryptophan from chorismate: step 5/5. Functionally, the beta subunit is responsible for the synthesis of L-tryptophan from indole and L-serine. This chain is Tryptophan synthase beta chain, found in Pseudomonas syringae pv. syringae (strain B728a).